The chain runs to 108 residues: Nucleoid-associated protein Mpe_A2533 (108 aa).

A disordered region spans residues 86-108 (TSEEKMGKLTAGMPLPPGMKLPF). Over residues 99 to 108 (PLPPGMKLPF) the composition is skewed to pro residues.

Belongs to the YbaB/EbfC family. In terms of assembly, homodimer.

It localises to the cytoplasm. It is found in the nucleoid. Binds to DNA and alters its conformation. May be involved in regulation of gene expression, nucleoid organization and DNA protection. The sequence is that of Nucleoid-associated protein Mpe_A2533 from Methylibium petroleiphilum (strain ATCC BAA-1232 / LMG 22953 / PM1).